The sequence spans 479 residues: MAQHTVYFPDAFLTQMREAMPSTLSFDDFLAACQRPLRRSIRVNTLKISVADFLQLTAPYGWTLTPIPWCEEGFWIERDNEDALPLGSTAEHLSGLFYIQEASSMLPVAALFADGNAPQRVMDVAAAPGSKTTQIAARMNNEGAILANEFSASRVKVLHANISRCGISNVALTHFDGRVFGAAVPEMFDAILLDAPCSGEGVVRKDPDALKNWSPESNQEIAATQRELIDSAFHALRPGGTLVYSTCTLNQEENEAVCLWLKETYPDAVEFLPLGDLFPGANKALTEEGFLHVFPQIYDCEGFFVARLRKTQAIPALPAPKYKVGNFPFSPVKDREAGQIRQAAADVGLNWDENLRLWQRDKELWLFPVGIEALIGKVRFSRLGIKLAETHNKGYRWQHEAVIALATPDNVNAFELTPQEAEEWYRGRDVYPQAAPVADDVLVTFQHQPIGLAKRIGSRLKNSYPRELVRDGKLFTGNA.

S-adenosyl-L-methionine is bound by residues 125-131 (AAAPGSK), E149, D176, and D194. C247 serves as the catalytic Nucleophile.

This sequence belongs to the class I-like SAM-binding methyltransferase superfamily. RsmB/NOP family.

Its subcellular location is the cytoplasm. It carries out the reaction cytidine(1407) in 16S rRNA + S-adenosyl-L-methionine = 5-methylcytidine(1407) in 16S rRNA + S-adenosyl-L-homocysteine + H(+). Functionally, specifically methylates the cytosine at position 1407 (m5C1407) of 16S rRNA. The protein is Ribosomal RNA small subunit methyltransferase F of Shigella boydii serotype 18 (strain CDC 3083-94 / BS512).